Here is a 573-residue protein sequence, read N- to C-terminus: ESX-1 secretion system protein EccA1 (573 aa).

Residue 334–341 participates in ATP binding; it reads GPPGTGKT.

The protein belongs to the CbxX/CfxQ family. Part of the ESX-1 / type VII secretion system (T7SS), which is composed of cytosolic and membrane components.

The protein resides in the cytoplasm. Its function is as follows. Part of the ESX-1 / type VII specialized secretion system (T7SS), which exports several proteins including EsxA and EsxB. EccA1 exhibits ATPase activity and may provide energy for the export of ESX-1 substrates. The protein is ESX-1 secretion system protein EccA1 of Mycobacterium leprae (strain TN).